The chain runs to 542 residues: MFKSVLYIGLSWVLVCFAQPDISTLASVICCMCGYGLLWRGLLSLVDSSSWRKIWCLAFFWTWSVEGFHFSWMLEDFYVGTSIYFVWCLLISYLAVTFASFSCLVVLCFRKQYWGALFWLPGVWVAIESVRYYGLLSGVSFDFIGWPLAATAYGRQFGSFFGWAGQSFVVIATNLGCCSVLVFRKSFSYGLWLVCCAFPYFLGGTYYEYVRRHFSNEEVLRVAIVQPGYSPHMQGARTASAIWSNLVSLCQGICPPVDVIVFPEVSVPFGLHRQAYSFHENQQVLESLVPNKFWNEFFTNLDWIRALSERFQCAVIMGMERWEDKNGVMHLYNAAECLSLQGEVTSYDKRILVPGGEYIPGGKFGFSLCKAFFPEFALPFQRLPGEKSGIVQITERIKAGISICYEETFGYAILPYKRQKADILVNLTNDGWYPHSRLPLVHFYHGVLRNQELGMPCIRACHTGVSAAVDSLGRIVGVLPWESKTCPVCPDVLQVSVPVYSYPTIYAKFGDAPLLFVAVSSVLGVVGYFLKRRGKTLTGSDI.

Helical transmembrane passes span Ala-26 to Val-46, Ile-54 to Leu-74, Leu-89 to Phe-109, Tyr-113 to Tyr-133, Trp-163 to Phe-183, and Phe-187 to Tyr-207. One can recognise a CN hydrolase domain in the interval Leu-220–Val-499. The active-site Proton acceptor is Glu-264. Lys-349 is a catalytic residue. The active-site Nucleophile is Cys-404. The chain crosses the membrane as a helical span at residues Phe-509 to Phe-529.

This sequence belongs to the CN hydrolase family. Apolipoprotein N-acyltransferase subfamily.

The protein resides in the cell inner membrane. The catalysed reaction is N-terminal S-1,2-diacyl-sn-glyceryl-L-cysteinyl-[lipoprotein] + a glycerophospholipid = N-acyl-S-1,2-diacyl-sn-glyceryl-L-cysteinyl-[lipoprotein] + a 2-acyl-sn-glycero-3-phospholipid + H(+). It functions in the pathway protein modification; lipoprotein biosynthesis (N-acyl transfer). Catalyzes the phospholipid dependent N-acylation of the N-terminal cysteine of apolipoprotein, the last step in lipoprotein maturation. This chain is Apolipoprotein N-acyltransferase, found in Chlamydia muridarum (strain MoPn / Nigg).